The sequence spans 147 residues: Large ribosomal subunit protein uL16 (147 aa).

The protein belongs to the universal ribosomal protein uL16 family. In terms of assembly, part of the 50S ribosomal subunit.

Its function is as follows. Binds 23S rRNA and is also seen to make contacts with the A and possibly P site tRNAs. The sequence is that of Large ribosomal subunit protein uL16 from Lactobacillus delbrueckii subsp. bulgaricus (strain ATCC 11842 / DSM 20081 / BCRC 10696 / JCM 1002 / NBRC 13953 / NCIMB 11778 / NCTC 12712 / WDCM 00102 / Lb 14).